Here is a 366-residue protein sequence, read N- to C-terminus: Chorismate synthase (366 aa).

Positions 48 and 54 each coordinate NADP(+). Residues R132–S134, N244–A245, G289, K304–S308, and R330 each bind FMN.

The protein belongs to the chorismate synthase family. Homotetramer. It depends on FMNH2 as a cofactor.

It carries out the reaction 5-O-(1-carboxyvinyl)-3-phosphoshikimate = chorismate + phosphate. Its pathway is metabolic intermediate biosynthesis; chorismate biosynthesis; chorismate from D-erythrose 4-phosphate and phosphoenolpyruvate: step 7/7. Functionally, catalyzes the anti-1,4-elimination of the C-3 phosphate and the C-6 proR hydrogen from 5-enolpyruvylshikimate-3-phosphate (EPSP) to yield chorismate, which is the branch point compound that serves as the starting substrate for the three terminal pathways of aromatic amino acid biosynthesis. This reaction introduces a second double bond into the aromatic ring system. The polypeptide is Chorismate synthase (Methylorubrum extorquens (strain PA1) (Methylobacterium extorquens)).